A 147-amino-acid polypeptide reads, in one-letter code: MVNLTAAEKTQVTNLWGKVNVKELGGEALSRLLVVYPWTRRFFEHFGDLSTADAVLHNAKVLAHGEKVLTSFGEGLKHLDNLKGTFADLSELHCDKLHVDPENFRLLGNVLVIVLARHFGKEFTPDVQAAYEKVVAGVANALAHKYH.

A Globin domain is found at Asn3–His147. The heme b site is built by His64 and His93.

The protein belongs to the globin family. As to quaternary structure, heterotetramer of two delta chains and two alpha chains. In terms of tissue distribution, red blood cells.

The sequence is that of Hemoglobin subunit delta (HBD) from Elephas maximus (Indian elephant).